The chain runs to 295 residues: Probable aspartoacylase (295 aa).

His-16 and Glu-19 together coordinate Zn(2+). Substrate contacts are provided by residues Arg-58 and 65–66; that span reads NR. His-107 contributes to the Zn(2+) binding site. Glu-166 and Tyr-277 together coordinate substrate.

This sequence belongs to the AspA/AstE family. Aspartoacylase subfamily. Requires Zn(2+) as cofactor.

The enzyme catalyses an N-acyl-L-aspartate + H2O = a carboxylate + L-aspartate. This chain is Probable aspartoacylase, found in Acaryochloris marina (strain MBIC 11017).